We begin with the raw amino-acid sequence, 207 residues long: Ribonuclease HII (207 aa).

The RNase H type-2 domain maps to 12 to 201 (ALVAGVDEVG…VRELLDVVSI (190 aa)). Positions 18, 19, and 110 each coordinate a divalent metal cation.

This sequence belongs to the RNase HII family. The cofactor is Mn(2+). It depends on Mg(2+) as a cofactor.

Its subcellular location is the cytoplasm. The catalysed reaction is Endonucleolytic cleavage to 5'-phosphomonoester.. Endonuclease that specifically degrades the RNA of RNA-DNA hybrids. The chain is Ribonuclease HII from Azotobacter vinelandii (strain DJ / ATCC BAA-1303).